The primary structure comprises 227 residues: UPF0758 protein Dred_2549 (227 aa).

Positions 105–227 (IIRCPEDVCG…FTSLKSKGLI (123 aa)) constitute an MPN domain. Zn(2+) is bound by residues H176, H178, and D189. Positions 176–189 (HNHPSGDPTPSRED) match the JAMM motif motif.

Belongs to the UPF0758 family.

The protein is UPF0758 protein Dred_2549 of Desulforamulus reducens (strain ATCC BAA-1160 / DSM 100696 / MI-1) (Desulfotomaculum reducens).